The following is a 130-amino-acid chain: Small ribosomal subunit protein uS11 (130 aa).

The protein belongs to the universal ribosomal protein uS11 family. Part of the 30S ribosomal subunit. Interacts with proteins S7 and S18. Binds to IF-3.

Located on the platform of the 30S subunit, it bridges several disparate RNA helices of the 16S rRNA. Forms part of the Shine-Dalgarno cleft in the 70S ribosome. This is Small ribosomal subunit protein uS11 from Buchnera aphidicola subsp. Cinara cedri (strain Cc).